A 338-amino-acid chain; its full sequence is Fructose-1,6-bisphosphatase class 1 (338 aa).

The Mg(2+) site is built by glutamate 91, aspartate 113, leucine 115, and aspartate 116. Substrate-binding positions include 116–119 (DGSS), asparagine 211, tyrosine 244, and lysine 277. Glutamate 283 lines the Mg(2+) pocket.

The protein belongs to the FBPase class 1 family. As to quaternary structure, homotetramer. Requires Mg(2+) as cofactor.

Its subcellular location is the cytoplasm. The enzyme catalyses beta-D-fructose 1,6-bisphosphate + H2O = beta-D-fructose 6-phosphate + phosphate. Its pathway is carbohydrate biosynthesis; gluconeogenesis. The sequence is that of Fructose-1,6-bisphosphatase class 1 from Oleidesulfovibrio alaskensis (strain ATCC BAA-1058 / DSM 17464 / G20) (Desulfovibrio alaskensis).